The chain runs to 203 residues: Translation initiation factor IF-3 (203 aa).

Residues 172–182 (EAPKNEKKTKE) are compositionally biased toward basic and acidic residues. The segment at 172 to 203 (EAPKNEKKTKENNPPFNRINLMKGENHAKNED) is disordered.

This sequence belongs to the IF-3 family. As to quaternary structure, monomer.

The protein resides in the cytoplasm. Functionally, IF-3 binds to the 30S ribosomal subunit and shifts the equilibrium between 70S ribosomes and their 50S and 30S subunits in favor of the free subunits, thus enhancing the availability of 30S subunits on which protein synthesis initiation begins. The chain is Translation initiation factor IF-3 from Helicobacter pylori (strain J99 / ATCC 700824) (Campylobacter pylori J99).